Consider the following 311-residue polypeptide: Small ribosomal subunit protein uS3 (311 aa).

Residues 17 to 86 form the KH type-2 domain; that stretch reads MDEYFAEQLN…NPQIDAQEVK (70 aa). Residues 190–267 are disordered; it reads PDSYTTTEPS…EPQAEVAEDL (78 aa). A compositionally biased stretch (low complexity) spans 194–204; that stretch reads TTTEPSEPVTE. The span at 205 to 231 shows a compositional bias: basic and acidic residues; that stretch reads PVEKPAEKPAAKPAEKPVEAPKKESAA. A compositionally biased stretch (low complexity) spans 232-247; the sequence is KPKTPAVAPEKPVETA. The segment covering 248 to 267 has biased composition (acidic residues); that stretch reads EVAEPEEAEEEPQAEVAEDL.

The protein belongs to the universal ribosomal protein uS3 family. In terms of assembly, part of the 30S ribosomal subunit.

Its function is as follows. Binds the lower part of the 30S subunit head. The chain is Small ribosomal subunit protein uS3 from Methanosarcina barkeri (strain Fusaro / DSM 804).